The primary structure comprises 88 residues: uncharacterized protein (88 aa).

The signal sequence occupies residues 1–24; that stretch reads MLPRSCKDFYETLRTAVLCGQACA.

To Rhizobium NGR234A y4oL.

This is an uncharacterized protein from Sinorhizobium fredii (strain NBRC 101917 / NGR234).